A 189-amino-acid chain; its full sequence is Peptide deformylase (189 aa).

Fe cation-binding residues include Cys-98 and His-140. Residue Glu-141 is part of the active site. His-144 provides a ligand contact to Fe cation.

This sequence belongs to the polypeptide deformylase family. The cofactor is Fe(2+).

It catalyses the reaction N-terminal N-formyl-L-methionyl-[peptide] + H2O = N-terminal L-methionyl-[peptide] + formate. Its function is as follows. Removes the formyl group from the N-terminal Met of newly synthesized proteins. Requires at least a dipeptide for an efficient rate of reaction. N-terminal L-methionine is a prerequisite for activity but the enzyme has broad specificity at other positions. The sequence is that of Peptide deformylase from Porphyromonas gingivalis (strain ATCC 33277 / DSM 20709 / CIP 103683 / JCM 12257 / NCTC 11834 / 2561).